A 219-amino-acid chain; its full sequence is Ribosomal RNA large subunit methyltransferase E (219 aa).

5 residues coordinate S-adenosyl-L-methionine: G60, W62, D80, D96, and D120. K160 serves as the catalytic Proton acceptor.

The protein belongs to the class I-like SAM-binding methyltransferase superfamily. RNA methyltransferase RlmE family.

It localises to the cytoplasm. It carries out the reaction uridine(2552) in 23S rRNA + S-adenosyl-L-methionine = 2'-O-methyluridine(2552) in 23S rRNA + S-adenosyl-L-homocysteine + H(+). Its function is as follows. Specifically methylates the uridine in position 2552 of 23S rRNA at the 2'-O position of the ribose in the fully assembled 50S ribosomal subunit. The chain is Ribosomal RNA large subunit methyltransferase E from Acidithiobacillus ferrooxidans (strain ATCC 23270 / DSM 14882 / CIP 104768 / NCIMB 8455) (Ferrobacillus ferrooxidans (strain ATCC 23270)).